Here is a 206-residue protein sequence, read N- to C-terminus: Small ribosomal subunit protein uS4A (206 aa).

The 67-residue stretch at 98 to 164 (LRLDNVAYKL…EKFKTFAENP (67 aa)) folds into the S4 RNA-binding domain.

This sequence belongs to the universal ribosomal protein uS4 family. As to quaternary structure, part of the 30S ribosomal subunit. Contacts protein S5. The interaction surface between S4 and S5 is involved in control of translational fidelity.

In terms of biological role, one of the primary rRNA binding proteins, it binds directly to 16S rRNA where it nucleates assembly of the body of the 30S subunit. With S5 and S12 plays an important role in translational accuracy. The polypeptide is Small ribosomal subunit protein uS4A (rspD1) (Clostridium acetobutylicum (strain ATCC 824 / DSM 792 / JCM 1419 / IAM 19013 / LMG 5710 / NBRC 13948 / NRRL B-527 / VKM B-1787 / 2291 / W)).